The primary structure comprises 368 residues: MVDAVKADPFGKVNAIDVLDLASLEARAEKVLGRGEFGYISEGSDDGYTMHRNTTAFQDVHMLPRVLQGVENPDQSTTFMGAKLASPLLTAPIASNTLAHPSGELGLAKGAKEAGIMMSQSTFASKTIAETAAVSDGAPYMFQLYMPKDWEYCQYLLDEAKQAGALAIILTADSTLGGYREKDVMNHYHLKGRLANLEGYNTGQSGVGAGGLFKESMQKLDLGLISKLASYSGLPIIIKGIQHPADAVAAITAGAAGIYVSNHGGRQLDGAPGAIEQLPAIAAAVDHRVPIIFDGGVQRGTHVLKALALGADLVGIGRPFSYGLALGGWQGVKDVADHLKMEINIAMQLTGCQTMADVKQMKVKTTFA.

Residues 13–368 (VNAIDVLDLA…KQMKVKTTFA (356 aa)) form the FMN hydroxy acid dehydrogenase domain. Tyr-39 serves as a coordination point for pyruvate. Residues 92 to 94 (PIA), Ser-121, and Gln-143 contribute to the FMN site. Residue Tyr-145 coordinates pyruvate. Position 171 (Thr-171) interacts with FMN. Arg-180 contacts pyruvate. FMN-binding residues include Lys-239 and Ser-261. Positions 263 and 266 each coordinate pyruvate. His-263 acts as the Proton acceptor in catalysis. Residues 294 to 298 (DGGVQ) and Arg-318 contribute to the FMN site.

The protein belongs to the FMN-dependent alpha-hydroxy acid dehydrogenase family. Homotetramer. FMN serves as cofactor.

The catalysed reaction is (S)-lactate + O2 = pyruvate + H2O2. The enzyme catalyses 2-hydroxyoctanoate + O2 = 2-oxooctanoate + H2O2. Catalyzes the oxidation of (S)-lactate (L-lactate) to pyruvate, with a reduction of O2 to H2O2. To a lesser extent is also able to use 2-hydroxyoctanoate as substrate. May be involved in the utilization of L-lactate as an energy source for growth. In Lacticaseibacillus rhamnosus (strain LMS2-1), this protein is L-lactate oxidase.